A 305-amino-acid polypeptide reads, in one-letter code: Oxygen-dependent coproporphyrinogen-III oxidase (305 aa).

S92 is a binding site for substrate. 2 residues coordinate a divalent metal cation: H96 and H106. The active-site Proton donor is H106. 108-110 serves as a coordination point for substrate; it reads NVR. A divalent metal cation-binding residues include H145 and H175. The tract at residues 239 to 274 is important for dimerization; that stretch reads YVEFNLLFDRGTLFGLQSGGRAESILISLPPLVRWE. Position 257 to 259 (257 to 259) interacts with substrate; sequence GGR.

Belongs to the aerobic coproporphyrinogen-III oxidase family. In terms of assembly, homodimer. It depends on a divalent metal cation as a cofactor.

It localises to the cytoplasm. It catalyses the reaction coproporphyrinogen III + O2 + 2 H(+) = protoporphyrinogen IX + 2 CO2 + 2 H2O. The protein operates within porphyrin-containing compound metabolism; protoporphyrin-IX biosynthesis; protoporphyrinogen-IX from coproporphyrinogen-III (O2 route): step 1/1. In terms of biological role, involved in the heme biosynthesis. Catalyzes the aerobic oxidative decarboxylation of propionate groups of rings A and B of coproporphyrinogen-III to yield the vinyl groups in protoporphyrinogen-IX. This Xylella fastidiosa (strain 9a5c) protein is Oxygen-dependent coproporphyrinogen-III oxidase.